A 649-amino-acid chain; its full sequence is Putative calpain-like cysteine protease A (649 aa).

The propeptide occupies 1 to 3 (MLT). 2 disordered regions span residues 1–22 (MLTT…SSPS) and 124–193 (PLSN…SMPA). The region spanning 15–123 (TTTTSSPSSD…LHANGEAKWY (109 aa)) is the C2 domain. Residues 140–149 (ITNSNNKDNN) show a composition bias toward low complexity. Over residues 159–172 (AQEKGDEDQHHSAD) the composition is skewed to basic and acidic residues. Domain III regions lie at residues 458–489 (EGTY…NATF) and 498–633 (EVEQ…ISLD).

It belongs to the peptidase C2 family. As to quaternary structure, monomer. Post-translationally, undergoes autolytic cleavage between Pro-192 and Ala-193.

It localises to the cytoplasm. Its subcellular location is the cytosol. Functionally, has a weak caseinolytic activity. The chain is Putative calpain-like cysteine protease A (cplA) from Dictyostelium discoideum (Social amoeba).